Here is a 193-residue protein sequence, read N- to C-terminus: MRLCDRDIEIWLDEGRLDIAPRPPIERINGATVDVRLGNQFRVFRGHTAAYIDLSGPKDEVTAALDRVMSDEIQLVEGEAFFLHPGELALAVTLESVTLPDDLVGWLDGRSSLARLGLMVHVTAHRIDPGWQGRIVLEFYNSGKLPLALRPGMLIGALSFEPLSGPAARPYNRREDAKYRNQQGAVASRIDKD.

Residues 110 to 115, D128, 136 to 138, Y171, K178, and Q182 contribute to the dCTP site; these read RSSLAR and VLE. Residue E138 is the Proton donor/acceptor of the active site. The interval 169–193 is disordered; the sequence is RPYNRREDAKYRNQQGAVASRIDKD.

This sequence belongs to the dCTP deaminase family. Homotrimer.

The enzyme catalyses dCTP + H2O + H(+) = dUTP + NH4(+). It participates in pyrimidine metabolism; dUMP biosynthesis; dUMP from dCTP (dUTP route): step 1/2. Catalyzes the deamination of dCTP to dUTP. In Sodalis glossinidius (strain morsitans), this protein is dCTP deaminase.